A 492-amino-acid chain; its full sequence is Peptidyl-prolyl cis-trans isomerase-like 4 (492 aa).

A PPIase cyclophilin-type domain is found at 1 to 161 (MAVLLETTLG…QDIRINHTVI (161 aa)). The disordered stretch occupies residues 167–188 (DDPPDLLIPDRSPEPTKEQLDS). Residues 177–187 (RSPEPTKEQLD) are compositionally biased toward basic and acidic residues. Serine 178 is modified (phosphoserine). Phosphothreonine is present on threonine 182. Glycyl lysine isopeptide (Lys-Gly) (interchain with G-Cter in SUMO2) cross-links involve residues lysine 201, lysine 212, and lysine 218. Residues 240 to 318 (NVLFVCKLNP…RRIHVDFSQS (79 aa)) enclose the RRM domain. Glycyl lysine isopeptide (Lys-Gly) (interchain with G-Cter in SUMO2) cross-links involve residues lysine 321 and lysine 362. 2 disordered regions span residues 368-409 (DEQG…NPNQ) and 423-492 (EESC…SKYR). Residues 377–390 (SHSHTSKKHKKKTR) show a composition bias toward basic residues. Serine 393 bears the Phosphoserine mark. Lysine 405 is covalently cross-linked (Glycyl lysine isopeptide (Lys-Gly) (interchain with G-Cter in SUMO2)). A compositionally biased stretch (basic and acidic residues) spans 426-436 (CWEKQKNEKRD). A Glycyl lysine isopeptide (Lys-Gly) (interchain with G-Cter in SUMO2) cross-link involves residue lysine 460. Serine 471 bears the Phosphoserine mark. A compositionally biased stretch (basic residues) spans 473 to 485 (KRDRSRSPKKSKA).

This sequence belongs to the cyclophilin-type PPIase family. PPIL4 subfamily.

The protein resides in the nucleus. It carries out the reaction [protein]-peptidylproline (omega=180) = [protein]-peptidylproline (omega=0). Its function is as follows. PPIases accelerate the folding of proteins. It catalyzes the cis-trans isomerization of proline imidic peptide bonds in oligopeptides. The polypeptide is Peptidyl-prolyl cis-trans isomerase-like 4 (Ppil4) (Mus musculus (Mouse)).